The chain runs to 879 residues: Beta-mannosidase (879 aa).

A signal peptide spans 1-17; the sequence is MLLRLLLLLAPCGAGFA. N-linked (GlcNAc...) asparagine glycans are attached at residues N35 and N77. C167 and C176 are joined by a disulfide. 190–192 contributes to the substrate binding site; sequence WDW. Residues N297 and N302 are each glycosylated (N-linked (GlcNAc...) asparagine). Position 456 (N456) interacts with substrate. E457 serves as the catalytic Proton donor. 3 cysteine pairs are disulfide-bonded: C540-C629, C732-C761, and C764-C769. The active-site Nucleophile is the E554. The N-linked (GlcNAc...) asparagine glycan is linked to N607. Residue N803 is glycosylated (N-linked (GlcNAc...) asparagine).

Belongs to the glycosyl hydrolase 2 family. In terms of assembly, monomer. Post-translationally, the N-terminus is blocked. N-glycosylated. As to expression, detected in kidney (at protein level). Highest expression is found in thyroid tissue. The amount of transcript is significantly higher in normal tissues than in tissues affected by the disease.

It is found in the lysosome. The catalysed reaction is Hydrolysis of terminal, non-reducing beta-D-mannose residues in beta-D-mannosides.. Its pathway is glycan metabolism; N-glycan degradation. Exoglycosidase that cleaves the single beta-linked mannose residue from the non-reducing end of all N-linked glycoprotein oligosaccharides. In Bos taurus (Bovine), this protein is Beta-mannosidase (MANBA).